A 307-amino-acid polypeptide reads, in one-letter code: Retron Ec86 putative ribosyltransferase/DNA-binding protein (307 aa).

Possible ribosyltransferase/DNA-binding component of antiviral defense system retron Ec86, composed of a non-coding RNA (ncRNA), a ribosyltransferase/DNA-binding protein and a reverse transcriptase (RT). Expression of the 3-gene retron confers protection against bacteriophages T5. At multiplicity of infection (MOI) of 0.02 cultures grow normally when infected with T5 without collapsing, at MOI 2 cultures enter growth stasis. The protein is Retron Ec86 putative ribosyltransferase/DNA-binding protein of Escherichia coli.